We begin with the raw amino-acid sequence, 231 residues long: Phosphatidylserine decarboxylase proenzyme (231 aa).

The active-site Schiff-base intermediate with substrate; via pyruvic acid is the S188. S188 is modified (pyruvic acid (Ser); by autocatalysis).

The protein belongs to the phosphatidylserine decarboxylase family. PSD-A subfamily. In terms of assembly, heterodimer of a large membrane-associated beta subunit and a small pyruvoyl-containing alpha subunit. Requires pyruvate as cofactor. Post-translationally, is synthesized initially as an inactive proenzyme. Formation of the active enzyme involves a self-maturation process in which the active site pyruvoyl group is generated from an internal serine residue via an autocatalytic post-translational modification. Two non-identical subunits are generated from the proenzyme in this reaction, and the pyruvate is formed at the N-terminus of the alpha chain, which is derived from the carboxyl end of the proenzyme. The post-translation cleavage follows an unusual pathway, termed non-hydrolytic serinolysis, in which the side chain hydroxyl group of the serine supplies its oxygen atom to form the C-terminus of the beta chain, while the remainder of the serine residue undergoes an oxidative deamination to produce ammonia and the pyruvoyl prosthetic group on the alpha chain.

It localises to the cell membrane. It carries out the reaction a 1,2-diacyl-sn-glycero-3-phospho-L-serine + H(+) = a 1,2-diacyl-sn-glycero-3-phosphoethanolamine + CO2. It functions in the pathway phospholipid metabolism; phosphatidylethanolamine biosynthesis; phosphatidylethanolamine from CDP-diacylglycerol: step 2/2. Its function is as follows. Catalyzes the formation of phosphatidylethanolamine (PtdEtn) from phosphatidylserine (PtdSer). The protein is Phosphatidylserine decarboxylase proenzyme of Rickettsia rickettsii (strain Iowa).